We begin with the raw amino-acid sequence, 254 residues long: Type III pantothenate kinase (254 aa).

Position 6–13 (6–13 (DLGNSAIK)) interacts with ATP. Substrate-binding positions include tyrosine 99 and 106 to 109 (GVDR). Residue aspartate 108 is the Proton acceptor of the active site. Residue aspartate 128 participates in K(+) binding. Threonine 131 lines the ATP pocket. Position 182 (threonine 182) interacts with substrate.

It belongs to the type III pantothenate kinase family. In terms of assembly, homodimer. NH4(+) serves as cofactor. K(+) is required as a cofactor.

It localises to the cytoplasm. The enzyme catalyses (R)-pantothenate + ATP = (R)-4'-phosphopantothenate + ADP + H(+). It participates in cofactor biosynthesis; coenzyme A biosynthesis; CoA from (R)-pantothenate: step 1/5. In terms of biological role, catalyzes the phosphorylation of pantothenate (Pan), the first step in CoA biosynthesis. This chain is Type III pantothenate kinase, found in Halorhodospira halophila (strain DSM 244 / SL1) (Ectothiorhodospira halophila (strain DSM 244 / SL1)).